A 403-amino-acid chain; its full sequence is Acetate kinase (403 aa).

Asn13 contributes to the Mg(2+) binding site. Lys20 is an ATP binding site. A substrate-binding site is contributed by Arg94. Asp153 (proton donor/acceptor) is an active-site residue. ATP is bound by residues 213–217 (HLGNG), 288–290 (DFR), and 336–340 (GIGEN). A Mg(2+)-binding site is contributed by Glu390.

The protein belongs to the acetokinase family. As to quaternary structure, homodimer. Mg(2+) serves as cofactor. The cofactor is Mn(2+).

It localises to the cytoplasm. It carries out the reaction acetate + ATP = acetyl phosphate + ADP. It functions in the pathway metabolic intermediate biosynthesis; acetyl-CoA biosynthesis; acetyl-CoA from acetate: step 1/2. Its function is as follows. Catalyzes the formation of acetyl phosphate from acetate and ATP. Can also catalyze the reverse reaction. This chain is Acetate kinase, found in Buchnera aphidicola subsp. Schizaphis graminum (strain Sg).